The sequence spans 364 residues: Zinc finger protein CONSTANS-LIKE 12 (364 aa).

The Zn(2+) site is built by cysteine 5, cysteine 8, cysteine 28, and histidine 33. A B box-type 1; atypical zinc finger spans residues 5-47; the sequence is CDHCATSQALIYCKSDLAKLCLNCDVHVHSANPLSHRHIRSLI. The segment at 48–88 adopts a B box-type 2; degenerate zinc-finger fold; the sequence is CEKCFSQPAAIRCLDEKVSYCQGCHWHESNCSELGHRVQSL. In terms of domain architecture, CCT spans 280–322; that stretch reads QDCGMSPGFIMSEAPWETNFEVSCPQARNEAKLRYKEKKLKRS.

The protein belongs to the CONSTANS family.

It is found in the nucleus. The polypeptide is Zinc finger protein CONSTANS-LIKE 12 (COL12) (Arabidopsis thaliana (Mouse-ear cress)).